Reading from the N-terminus, the 258-residue chain is L-aspartate dehydrogenase 1 (258 aa).

The NAD(+) site is built by Ala121 and Asn181. Residue His211 is part of the active site.

Belongs to the L-aspartate dehydrogenase family.

It carries out the reaction L-aspartate + NADP(+) + H2O = oxaloacetate + NH4(+) + NADPH + H(+). The catalysed reaction is L-aspartate + NAD(+) + H2O = oxaloacetate + NH4(+) + NADH + H(+). The protein operates within cofactor biosynthesis; NAD(+) biosynthesis; iminoaspartate from L-aspartate (dehydrogenase route): step 1/1. Specifically catalyzes the NAD or NADP-dependent dehydrogenation of L-aspartate to iminoaspartate. The chain is L-aspartate dehydrogenase 1 from Bordetella pertussis (strain Tohama I / ATCC BAA-589 / NCTC 13251).